Consider the following 410-residue polypeptide: Imidazolonepropionase (410 aa).

Positions 71 and 73 each coordinate Fe(3+). Residues H71 and H73 each coordinate Zn(2+). 4-imidazolone-5-propanoate is bound by residues R80, Y143, and H175. Y143 is a binding site for N-formimidoyl-L-glutamate. Residue H235 participates in Fe(3+) binding. H235 lines the Zn(2+) pocket. A 4-imidazolone-5-propanoate-binding site is contributed by E238. D309 is a Fe(3+) binding site. D309 contacts Zn(2+).

Belongs to the metallo-dependent hydrolases superfamily. HutI family. The cofactor is Zn(2+). It depends on Fe(3+) as a cofactor.

It is found in the cytoplasm. The enzyme catalyses 4-imidazolone-5-propanoate + H2O = N-formimidoyl-L-glutamate. The protein operates within amino-acid degradation; L-histidine degradation into L-glutamate; N-formimidoyl-L-glutamate from L-histidine: step 3/3. In terms of biological role, catalyzes the hydrolytic cleavage of the carbon-nitrogen bond in imidazolone-5-propanoate to yield N-formimidoyl-L-glutamate. It is the third step in the universal histidine degradation pathway. The sequence is that of Imidazolonepropionase from Thermoplasma acidophilum (strain ATCC 25905 / DSM 1728 / JCM 9062 / NBRC 15155 / AMRC-C165).